The chain runs to 358 residues: 3-dehydroquinate synthase (358 aa).

NAD(+)-binding positions include 102-106 (GVVGD), 126-127 (TT), K139, and K148. Zn(2+)-binding residues include E181, H244, and H260.

This sequence belongs to the sugar phosphate cyclases superfamily. Dehydroquinate synthase family. It depends on Co(2+) as a cofactor. Requires Zn(2+) as cofactor. The cofactor is NAD(+).

It localises to the cytoplasm. The enzyme catalyses 7-phospho-2-dehydro-3-deoxy-D-arabino-heptonate = 3-dehydroquinate + phosphate. It participates in metabolic intermediate biosynthesis; chorismate biosynthesis; chorismate from D-erythrose 4-phosphate and phosphoenolpyruvate: step 2/7. Its function is as follows. Catalyzes the conversion of 3-deoxy-D-arabino-heptulosonate 7-phosphate (DAHP) to dehydroquinate (DHQ). The chain is 3-dehydroquinate synthase from Symbiobacterium thermophilum (strain DSM 24528 / JCM 14929 / IAM 14863 / T).